A 466-amino-acid chain; its full sequence is GTPase Der (466 aa).

2 EngA-type G domains span residues 3–167 (PTLV…PDEP) and 176–350 (PKIA…GAAM). GTP is bound by residues 9 to 16 (GRSNVGKS), 56 to 60 (DTGGF), 119 to 122 (NKTE), 182 to 189 (GRPNVGKS), 229 to 233 (DTAGL), and 294 to 297 (NKWD). The 85-residue stretch at 351 to 435 (AHLPTPRLTR…PLRIEFRTGR (85 aa)) folds into the KH-like domain. Positions 433-466 (TGRNPYAGKSPAPLTEAEAKRAHRRRRYGRKKYG) are disordered. Residues 453–466 (RAHRRRRYGRKKYG) show a composition bias toward basic residues.

The protein belongs to the TRAFAC class TrmE-Era-EngA-EngB-Septin-like GTPase superfamily. EngA (Der) GTPase family. Associates with the 50S ribosomal subunit.

Its function is as follows. GTPase that plays an essential role in the late steps of ribosome biogenesis. This chain is GTPase Der, found in Nitrosospira multiformis (strain ATCC 25196 / NCIMB 11849 / C 71).